A 236-amino-acid polypeptide reads, in one-letter code: Small ribosomal subunit protein uS2c (236 aa).

It belongs to the universal ribosomal protein uS2 family.

It localises to the plastid. The protein localises to the chloroplast. This Ceratophyllum demersum (Rigid hornwort) protein is Small ribosomal subunit protein uS2c (rps2).